A 380-amino-acid chain; its full sequence is ATPase ASNA1 homolog (380 aa).

48 to 55 is an ATP binding site; sequence KGGVGKTT. The active site involves aspartate 77. Glutamate 248 and asparagine 275 together coordinate ATP.

The protein belongs to the arsA ATPase family. As to quaternary structure, homodimer.

The protein resides in the cytoplasm. It is found in the endoplasmic reticulum. Functionally, ATPase required for the post-translational delivery of tail-anchored (TA) proteins to the endoplasmic reticulum. Recognizes and selectively binds the transmembrane domain of TA proteins in the cytosol. This complex then targets to the endoplasmic reticulum by membrane-bound receptors, where the tail-anchored protein is released for insertion. This process is regulated by ATP binding and hydrolysis. ATP binding drives the homodimer towards the closed dimer state, facilitating recognition of newly synthesized TA membrane proteins. ATP hydrolysis is required for insertion. Subsequently, the homodimer reverts towards the open dimer state, lowering its affinity for the membrane-bound receptor, and returning it to the cytosol to initiate a new round of targeting. This is ATPase ASNA1 homolog from Plasmodium yoelii yoelii.